The primary structure comprises 156 residues: ATP synthase subunit b (156 aa).

The chain crosses the membrane as a helical span at residues 12-32 (VAFFIFVIFCMKFVWPPVIAA).

It belongs to the ATPase B chain family. In terms of assembly, F-type ATPases have 2 components, F(1) - the catalytic core - and F(0) - the membrane proton channel. F(1) has five subunits: alpha(3), beta(3), gamma(1), delta(1), epsilon(1). F(0) has three main subunits: a(1), b(2) and c(10-14). The alpha and beta chains form an alternating ring which encloses part of the gamma chain. F(1) is attached to F(0) by a central stalk formed by the gamma and epsilon chains, while a peripheral stalk is formed by the delta and b chains.

Its subcellular location is the cell inner membrane. In terms of biological role, f(1)F(0) ATP synthase produces ATP from ADP in the presence of a proton or sodium gradient. F-type ATPases consist of two structural domains, F(1) containing the extramembraneous catalytic core and F(0) containing the membrane proton channel, linked together by a central stalk and a peripheral stalk. During catalysis, ATP synthesis in the catalytic domain of F(1) is coupled via a rotary mechanism of the central stalk subunits to proton translocation. Component of the F(0) channel, it forms part of the peripheral stalk, linking F(1) to F(0). This chain is ATP synthase subunit b, found in Pseudomonas savastanoi pv. phaseolicola (strain 1448A / Race 6) (Pseudomonas syringae pv. phaseolicola (strain 1448A / Race 6)).